The primary structure comprises 534 residues: uncharacterized protein (534 aa).

The first 22 residues, 1-22, serve as a signal peptide directing secretion; sequence MGLRLLFSLICVFCISNIFTQA. N-linked (GlcNAc...) asparagine glycosylation occurs at asparagine 31. Disordered stretches follow at residues 70-145 and 176-418; these read PTYY…SSVS and SSLS…SSAP. N-linked (GlcNAc...) asparagine glycosylation is present at asparagine 426.

Its subcellular location is the endoplasmic reticulum. The protein resides in the cell membrane. This is an uncharacterized protein from Schizosaccharomyces pombe (strain 972 / ATCC 24843) (Fission yeast).